Here is a 412-residue protein sequence, read N- to C-terminus: Inositol polyphosphate-5-phosphatase A (412 aa).

C409 is lipidated: S-farnesyl cysteine. A propeptide spans V410–Q412 (removed in mature form).

The protein belongs to the inositol 1,4,5-trisphosphate 5-phosphatase type I family. Interacts with TASOR. Isoprenylation at Cys-409 is required for localization at the membrane.

It localises to the cell membrane. Its subcellular location is the cell projection. The protein resides in the dendrite. The enzyme catalyses 1D-myo-inositol 1,4,5-trisphosphate + H2O = 1D-myo-inositol 1,4-bisphosphate + phosphate. The catalysed reaction is 1D-myo-inositol 1,3,4,5-tetrakisphosphate + H2O = 1D-myo-inositol 1,3,4-trisphosphate + phosphate. Inhibited by EDTA and 2,3-bisphosphoglycerate. Its function is as follows. Phosphatase that specifically hydrolyzes the 5-phosphate of inositol 1,4,5-trisphosphate to inositol 1,4-bisphosphate, and inositol 1,3,4,5-tetrasphosphate to inositol 1,3,4-trisphosphate. Plays a crucial role in the survival of cerebellar Purkinje cells. The chain is Inositol polyphosphate-5-phosphatase A (INPP5A) from Canis lupus familiaris (Dog).